Reading from the N-terminus, the 1373-residue chain is MEVLMAERADLVFHNKAIDGTAMKRLISRLIDHFGMAYTSHILDQVKTLGFRQATLTSISLGIDDLLTTPSKGWLVQDAEQQSLILEKHHHYGNVHAVEKLRQSIEIWYATSEYLRQEMNPNFRMTDPFNPVYIMSFSGARGNASQVHQLVGMRGLMSDPQGQMIDLPIQSNLREGLSLTEYTISCYGARKGVVDTAVRTSDAGYLTRRLVEVVQHIVVRRTDCGTIRGISVSPRNGVGVTERIFIQTLIGRVLANDVYMGLRCIATRNQDIGIGLVNRFITSRAQPIYIRSPFTCRSTSWICQLCYGRSTTHGNLVELGEAVGIIAGQSIGEPGTQLTLRTFHTGGVFTGGIAEHVRAPSNGKIKFNEDLVHPTRTRHGHPAFLCHIDLHVTIESQDIIHKVNIPPKSFLLVQNDQYVESEQVIAEIRAGTSTLKERVQKHIYSDSEGEMHWSTDVYHTPEYTHGNVHLLPKTSHLWVLSGSPCRSSIVPFPLHKDQDQMNVQSLYVEERYISDLSMNNDRVRHKLFGWDQKRGRVSYYSGPDRIISNRNWDSIYPLILHENSDLLAKRRRNRFIIPFQYDQEQEKELRPPGIVIKIPIKGILRRNSILAYFDDPRYRRSSSGIAKYGTIEVDSIIKKEDLIEYRKTREFGPKYQIQIKVNRFFFIPEEVHILPRSSSIMVRNNSIIGVDTRITLNIRSQVGGLVRVEKKKKRIELKISSGDIHFPGETDNIARYSGILIPPGRVKNTESKFKNWIYVQRITPIKKKYFVSVRPVVTYEIADGINLATFFPQDLLQEKNNLQLRVVNYILYGDGKPIRGIFHTSIQLVRTCLVLNWDQDRAGSIEEEEAYTSLAEVRVNDLIRNFIRIDLVKSPISSTGKENDMAGSGLIPNNGSDRINTNPFFSKAKTQSLSQHQGTIRTLLNRNKEGQGESLMVLSSSNCSRIGPLNGSKYHNVTKESIQEDPMISIRNSLGPLGTVPNILNFSSSYHSITHNEILFNKYLLPDNSRETFLVPKSYFMDENRRIYNLDPCSNIILTPFNLNWCFLHHDYWEDTSTIISLGQFLCENICISKDGPCVKSGQIIIVHVDSLVIRLAKYHLATRGATVHGHYGEILYEGDTLVTFIYEKSRSGDITQGLPKVEQVLEVRSIDSISMNLEKRVEGWNERITGFLGIPWEFFISAQLTIVQSRISLVNKIQKVYRSQGVQIHNRHIETIVRQITSKVLVSEDGMSNVFSPRELIGLLRAERIGRALEDDICYRAILLGITRASLNTQSFISEASFQETTRVLAKAALRSRIDWLKGLKENVVLGGMIPVGTGFKGFVHHSREHNNISLEIKKKNLFDGKMRDILFYHREFCGSCIPKNFHDTSEQ.

Residues C224, C296, C303, and C306 each coordinate Zn(2+).

Belongs to the RNA polymerase beta' chain family. RpoC2 subfamily. In plastids the minimal PEP RNA polymerase catalytic core is composed of four subunits: alpha, beta, beta', and beta''. When a (nuclear-encoded) sigma factor is associated with the core the holoenzyme is formed, which can initiate transcription. It depends on Zn(2+) as a cofactor.

It is found in the plastid. The protein resides in the chloroplast. It catalyses the reaction RNA(n) + a ribonucleoside 5'-triphosphate = RNA(n+1) + diphosphate. Functionally, DNA-dependent RNA polymerase catalyzes the transcription of DNA into RNA using the four ribonucleoside triphosphates as substrates. This Amborella trichopoda protein is DNA-directed RNA polymerase subunit beta''.